A 146-amino-acid polypeptide reads, in one-letter code: MHCPFCQNPDTKVIDTRISDDGHSIRRRRVCPKCSKRFTTVETSMLLVTKRSGGVEPFSRDKVISGVRKACQGRPVREEDLKLLGQKVEEDLRSRGLAEVTSDEVGKAILKPLRDLDVVAYLRFASVYQNFAGLEDFQSAIDGLRE.

A zinc finger spans residues 3–34; sequence CPFCQNPDTKVIDTRISDDGHSIRRRRVCPKC. In terms of domain architecture, ATP-cone spans 46-136; sequence LLVTKRSGGV…VYQNFAGLED (91 aa).

The protein belongs to the NrdR family. Zn(2+) is required as a cofactor.

Functionally, negatively regulates transcription of bacterial ribonucleotide reductase nrd genes and operons by binding to NrdR-boxes. The sequence is that of Transcriptional repressor NrdR from Bifidobacterium longum (strain NCC 2705).